The sequence spans 336 residues: Dual specificity mitogen-activated protein kinase kinase sek-1 (336 aa).

A Protein kinase domain is found at 50–311; the sequence is LVVLEELGKG…YPELLAMPFM (262 aa). ATP is bound by residues 56–64 and Lys-79; that span reads LGKGGYGIV. Catalysis depends on Asp-176, which acts as the Proton acceptor. A Phosphoserine modification is found at Ser-204. Residue Thr-208 is modified to Phosphothreonine.

Belongs to the protein kinase superfamily. STE Ser/Thr protein kinase family. MAP kinase kinase subfamily. In terms of assembly, interacts with nsy-1. Interacts with unc-16. Mg(2+) serves as cofactor. As to expression, expressed in linker cell in males.

It catalyses the reaction L-seryl-[protein] + ATP = O-phospho-L-seryl-[protein] + ADP + H(+). The catalysed reaction is L-threonyl-[protein] + ATP = O-phospho-L-threonyl-[protein] + ADP + H(+). The enzyme catalyses L-tyrosyl-[protein] + ATP = O-phospho-L-tyrosyl-[protein] + ADP + H(+). With respect to regulation, activated by nsy-1-mediated phosphorylation. Dual specificity protein kinase which acts as an essential component of the p38 signal transduction pathway which is also composed of upstream effector nsy-1 and downstream effector pmk-1. May phosphorylate pmk-1. Downstream of CaMKII unc-43 and adapter protein tir-1, plays a role in determining asymmetric cell fates in olfactory AWC neurons during neuronal development. Activation results in the repression of odorant receptor str-2 expression in one of the 2 AWC neurons. Involved in resistance to pathogenic Gram-positive and Gram-negative bacterial and fungal infection. Involved in resistance to the nematotoxic C.cinerea galectin Cgl2. Probably by promoting pmk-1-mediated activation of skn-1, involved in the up-regulation of gcs-1 and glutathione-S-transferase gst-4 expression upon bacterial infection. Probably downstream of tir-1, required for the expression of antimicrobial peptide nlp-29 in the epidermis in response to fungal infection or physical injury. Regulates susceptibility of B.thuringiensis pore-forming toxin Cry5B and Cry21A. Involved in the response to oxidative stress. May regulate transcription factor daf-16 localization during oxidative stress. By phosphorylating pmk-1, regulates skn-1 localization during oxidative stress. By phosphorylating and activating pmk-1, plays a role in the stabilization of transcription factor rnt-1 in the intestine during oxidative stress. Up-regulates expression of gcs-1 in intestine upon arsenite treatment. Regulates germline proliferation in response to osmotic stress, starvation and germline apoptosis induced by heavy metals, such as Cu(2+). In association with mek-1, regulates germline cell apoptosis in response to oxidative, osmotic and heat shock stresses. Plays a role downstream of tir-1/nsy-1 in regulating susceptibility to anoxia. In males, by regulating pqn-41 expression, involved in non-apoptotic death of the linker cell which guides gonad elongation during larval development. Involved in egg laying. This is Dual specificity mitogen-activated protein kinase kinase sek-1 from Caenorhabditis elegans.